Reading from the N-terminus, the 301-residue chain is Ribonuclease Z (301 aa).

His63, His65, Asp67, His68, His141, Asp204, and His262 together coordinate Zn(2+). The active-site Proton acceptor is Asp67.

Belongs to the RNase Z family. As to quaternary structure, homodimer. Zn(2+) is required as a cofactor.

It catalyses the reaction Endonucleolytic cleavage of RNA, removing extra 3' nucleotides from tRNA precursor, generating 3' termini of tRNAs. A 3'-hydroxy group is left at the tRNA terminus and a 5'-phosphoryl group is left at the trailer molecule.. Its function is as follows. Zinc phosphodiesterase, which displays some tRNA 3'-processing endonuclease activity. Probably involved in tRNA maturation, by removing a 3'-trailer from precursor tRNA. The protein is Ribonuclease Z of Streptomyces coelicolor (strain ATCC BAA-471 / A3(2) / M145).